Reading from the N-terminus, the 372-residue chain is Probable basic-leucine zipper transcription factor G (372 aa).

Disordered stretches follow at residues 1 to 20 (MLSV…QQQQ) and 176 to 234 (TTNN…EKFE). 2 stretches are compositionally biased toward low complexity: residues 11-20 (QQPQQQQQQQ) and 176-215 (TTNN…KSNT). Polar residues predominate over residues 223 to 234 (IRNSNSTFEKFE). The bZIP domain maps to 277–340 (ELKRQKRLIK…LILKAEVGQL (64 aa)). The tract at residues 279–301 (KRQKRLIKNRESAHLSRQRKRER) is basic motif. Residues 305-340 (LEHRVEELSSNSIDINKTLSSLENENLILKAEVGQL) form a leucine-zipper region.

The protein belongs to the bZIP family.

The protein resides in the nucleus. In terms of biological role, probable transcriptional regulator. The chain is Probable basic-leucine zipper transcription factor G (bzpG) from Dictyostelium discoideum (Social amoeba).